The sequence spans 211 residues: Large ribosomal subunit protein uL3 (211 aa).

This sequence belongs to the universal ribosomal protein uL3 family. In terms of assembly, part of the 50S ribosomal subunit. Forms a cluster with proteins L14 and L19.

Functionally, one of the primary rRNA binding proteins, it binds directly near the 3'-end of the 23S rRNA, where it nucleates assembly of the 50S subunit. This Halothermothrix orenii (strain H 168 / OCM 544 / DSM 9562) protein is Large ribosomal subunit protein uL3.